The primary structure comprises 349 residues: MGAQPEQTQKPSSRVQTLFKRVKAFFTKTGPPPPPPAPSRNLGCTHVYGYVFGHLGEREPEHSPSQQVLDTGEQLMVPVDVLEVDNEGALWKFLLSGAMAGAVSRTGTAPLDRAKVYMQVYSSKKNFMNLLGGLRSLIQEGGIRSLWRGNGINVLKIAPEYAIKFSVFEQCKNYFCGVHESPPFQERLLAGSLAVATSQTLINPMEVLKTRLTLRRTGQYKGLLDCARQILEQEGTRALYRGYLPNMLGIIPYACTDLAVYEMLNCLWLKSGRDMKDPSGLVSLSSVTLSTTCGQMASYPLTLVRTRMQAQGQLGPFSNLAYHDPLPLLSELSHDPPKHTQTDSQTLHI.

The next 4 membrane-spanning stretches (helical) occupy residues 88 to 104 (GALWKFLLSGAMAGAVS), 149 to 168 (GNGINVLKIAPEYAIKFSVF), 188 to 205 (LLAGSLAVATSQTLINPM), and 243 to 261 (YLPNMLGIIPYACTDLAVY). Solcar repeat units lie at residues 88-174 (GALW…CKNY) and 182-267 (PPFQ…LNCL).

The protein belongs to the mitochondrial carrier (TC 2.A.29) family.

It is found in the mitochondrion inner membrane. The catalysed reaction is Mg(2+)(out) + phosphate(in) + ATP(out) = Mg(2+)(in) + phosphate(out) + ATP(in). It carries out the reaction ADP(out) + phosphate(in) + H(+)(out) = ADP(in) + phosphate(out) + H(+)(in). In terms of biological role, calcium-independent ATP-Mg/Pi exchanger that catalyzes the electroneutral exchange of Mg-ATP or free ADP against an hydrogenphosphate and participates in the net transport of adenine nucleotides across the mitochondria inner membrane. The polypeptide is Mitochondrial carrier protein SCaMC-3L (Bos taurus (Bovine)).